The following is a 152-amino-acid chain: Early glycoprotein GP48 (152 aa).

The first 25 residues, 1-25, serve as a signal peptide directing secretion; it reads MVMMLRTWRLLPMVLLAAYCYCVFG. Residues N48, N53, N61, N69, N108, N112, N122, N139, and N148 are each glycosylated (N-linked (GlcNAc...) asparagine; by host).

This sequence belongs to the RL11 family. Post-translationally, N-glycosylated and possibly O-glycosylated.

The protein resides in the virion membrane. The sequence is that of Early glycoprotein GP48 (UL4) from Homo sapiens (Human).